The primary structure comprises 456 residues: Chordin-like protein 1 (456 aa).

The signal sequence occupies residues M1 to T27. 2 consecutive VWFC domains span residues T35–P100 and K113–R179. An N-linked (GlcNAc...) asparagine glycan is attached at N118. Positions R179–D181 match the Cell attachment site motif. Residues A202 to S223 form a disordered region. The VWFC 3 domain occupies Q258–P323. The N-linked (GlcNAc...) asparagine glycan is linked to N291.

As to expression, expressed in the developing cornea and in the eye anterior segment in addition to the retina. Differentially expressed in the fetal brain. There is high expression in cerebellum and neocortex. Expressed in retinal pericytes.

The protein localises to the secreted. Antagonizes the function of BMP4 by binding to it and preventing its interaction with receptors. Alters the fate commitment of neural stem cells from gliogenesis to neurogenesis. Contributes to neuronal differentiation of neural stem cells in the brain by preventing the adoption of a glial fate. May play a crucial role in dorsoventral axis formation. May play a role in embryonic bone formation. May also play an important role in regulating retinal angiogenesis through modulation of BMP4 actions in endothelial cells. Plays a role during anterior segment eye development. This Homo sapiens (Human) protein is Chordin-like protein 1 (CHRDL1).